A 1382-amino-acid polypeptide reads, in one-letter code: DNA-directed RNA polymerase subunit beta (1382 aa).

The protein belongs to the RNA polymerase beta chain family. The RNAP catalytic core consists of 2 alpha, 1 beta, 1 beta' and 1 omega subunit. When a sigma factor is associated with the core the holoenzyme is formed, which can initiate transcription.

The catalysed reaction is RNA(n) + a ribonucleoside 5'-triphosphate = RNA(n+1) + diphosphate. DNA-dependent RNA polymerase catalyzes the transcription of DNA into RNA using the four ribonucleoside triphosphates as substrates. In Paracoccus denitrificans (strain Pd 1222), this protein is DNA-directed RNA polymerase subunit beta.